We begin with the raw amino-acid sequence, 298 residues long: tRNA-cytidine(32) 2-sulfurtransferase (298 aa).

Residues 1–26 (MTAVISLPDPPQRASRGPRVAGPGQD) form a disordered region. The short motif at 57–62 (SGGKDS) is the PP-loop motif element. Residues C132, C135, and C223 each contribute to the [4Fe-4S] cluster site.

The protein belongs to the TtcA family. As to quaternary structure, homodimer. It depends on Mg(2+) as a cofactor. The cofactor is [4Fe-4S] cluster.

The protein localises to the cytoplasm. It carries out the reaction cytidine(32) in tRNA + S-sulfanyl-L-cysteinyl-[cysteine desulfurase] + AH2 + ATP = 2-thiocytidine(32) in tRNA + L-cysteinyl-[cysteine desulfurase] + A + AMP + diphosphate + H(+). It functions in the pathway tRNA modification. Catalyzes the ATP-dependent 2-thiolation of cytidine in position 32 of tRNA, to form 2-thiocytidine (s(2)C32). The sulfur atoms are provided by the cysteine/cysteine desulfurase (IscS) system. The polypeptide is tRNA-cytidine(32) 2-sulfurtransferase (Stenotrophomonas maltophilia (strain R551-3)).